The following is a 1238-amino-acid chain: uncharacterized protein (1238 aa).

Disordered stretches follow at residues 1–38 (MSSK…DISS), 122–156 (SSTP…RPSF), 229–439 (PKNN…KNKE), 660–1016 (KNKL…TGAA), 1051–1083 (EEED…KLNS), and 1098–1191 (KKSG…NASR). 3 stretches are compositionally biased toward low complexity: residues 10 to 26 (NKNN…NNNN), 129 to 149 (LSPF…QSPL), and 234 to 276 (QIDS…TQSQ). Residues 317-343 (ELQNQTQINKSKQDLTNISQKINITTS) show a composition bias toward polar residues. Positions 344-361 (QHDKDDLGEYRMSEKGGG) are enriched in basic and acidic residues. Residues 362-372 (DDGDDDDDYDN) are compositionally biased toward acidic residues. The segment covering 383 to 394 (TNKKQQQQHHHK) has biased composition (basic residues). Residues 395 to 416 (GKEESQSEYYEKEKEKEKEDIA) show a composition bias toward basic and acidic residues. 3 stretches are compositionally biased toward low complexity: residues 417–435 (TTRA…NNIN), 678–691 (QQQQ…QQQE), and 712–792 (QPSQ…QEKQ). Residues 793–805 (QSQEKHQSQEKHQ) are compositionally biased toward basic and acidic residues. Composition is skewed to low complexity over residues 806-859 (SQQS…SQQK) and 882-906 (SQSQ…QSQR). A compositionally biased stretch (acidic residues) spans 916-927 (ENQDSENLDDTV). Polar residues predominate over residues 929-944 (MNYNQIPSTLDHSTLQ). Residues 966-975 (EIERRRRELA) show a composition bias toward basic and acidic residues. Over residues 976–990 (GEDSDEEFEILDEDQ) the composition is skewed to acidic residues. 2 stretches are compositionally biased toward low complexity: residues 1062–1083 (QNNN…KLNS) and 1108–1121 (SSSS…NKKN). Positions 1123-1133 (PQPTKSVNKPR) are enriched in polar residues. A compositionally biased stretch (low complexity) spans 1142–1181 (SQNRQKQSEQQQQQPQQQPQLPQQQQQQQQQQQLRQQQNE). Residues 1182 to 1191 (NTISSLNASR) are compositionally biased toward polar residues.

This is an uncharacterized protein from Dictyostelium discoideum (Social amoeba).